A 379-amino-acid chain; its full sequence is Cell division protein FtsZ (379 aa).

GTP contacts are provided by residues 18 to 22 (GGGVN), 105 to 107 (GTG), E136, R140, and D184.

Belongs to the FtsZ family. Homodimer. Polymerizes to form a dynamic ring structure in a strictly GTP-dependent manner. Interacts directly with several other division proteins.

It is found in the cytoplasm. Essential cell division protein that forms a contractile ring structure (Z ring) at the future cell division site. The regulation of the ring assembly controls the timing and the location of cell division. One of the functions of the FtsZ ring is to recruit other cell division proteins to the septum to produce a new cell wall between the dividing cells. Binds GTP and shows GTPase activity. The polypeptide is Cell division protein FtsZ (Mycobacterium leprae (strain TN)).